The following is a 316-amino-acid chain: Transaldolase (316 aa).

K131 serves as the catalytic Schiff-base intermediate with substrate.

It belongs to the transaldolase family. Type 1 subfamily. In terms of assembly, homodimer.

The protein resides in the cytoplasm. It carries out the reaction D-sedoheptulose 7-phosphate + D-glyceraldehyde 3-phosphate = D-erythrose 4-phosphate + beta-D-fructose 6-phosphate. Its pathway is carbohydrate degradation; pentose phosphate pathway; D-glyceraldehyde 3-phosphate and beta-D-fructose 6-phosphate from D-ribose 5-phosphate and D-xylulose 5-phosphate (non-oxidative stage): step 2/3. Transaldolase is important for the balance of metabolites in the pentose-phosphate pathway. The chain is Transaldolase from Buchnera aphidicola subsp. Acyrthosiphon pisum (strain 5A).